The primary structure comprises 314 residues: Olfactory receptor 1E2 (314 aa).

The Extracellular portion of the chain corresponds to 1–25 (MMGQNQTSISDFLLLGLPIQPEQQN). Asparagine 5 is a glycosylation site (N-linked (GlcNAc...) asparagine). Residues 26-49 (LCYALFLAMYLTTLLGNLLIIVLI) traverse the membrane as a helical segment. Residues 50 to 57 (RLDSHLHT) are Cytoplasmic-facing. The helical transmembrane segment at 58–79 (PMYLFLSNLSFSDLCFSSVTIP) threads the bilayer. Residues 80 to 100 (KLLQNMQNQDPSIPYADCLTQ) lie on the Extracellular side of the membrane. Cysteine 97 and cysteine 189 are disulfide-bonded. The helical transmembrane segment at 101–120 (MYFFLLFGDLESFLLVAMAY) threads the bilayer. Residues 121–139 (DRYVAICFPLHYTAIMSPM) lie on the Cytoplasmic side of the membrane. The helical transmembrane segment at 140–158 (LCLSLVALSWVLTTFHAML) threads the bilayer. At 159–195 (HTLLMARLCFCADNVIPHFFCDMSALLKLACSDTRVN) the chain is on the extracellular side. The chain crosses the membrane as a helical span at residues 196–219 (EWVIFIMGGLIVVIPFLLILGSYA). Topologically, residues 220 to 236 (RIVSSILKVPSSKGICK) are cytoplasmic. The helical transmembrane segment at 237–259 (AFSTCGSHLSVVSLFYGTIIGLY) threads the bilayer. Residues 260 to 272 (LCPSANSSTLKET) are Extracellular-facing. A glycan (N-linked (GlcNAc...) asparagine) is linked at asparagine 265. The helical transmembrane segment at 273–292 (VMAMMYTVVTPMLNPFIYSL) threads the bilayer. Residues 293 to 314 (RNRDMKGALERVICKRKNPFLL) lie on the Cytoplasmic side of the membrane.

It belongs to the G-protein coupled receptor 1 family.

It is found in the cell membrane. Its function is as follows. Odorant receptor. This Gorilla gorilla gorilla (Western lowland gorilla) protein is Olfactory receptor 1E2 (OR1E2).